The following is a 378-amino-acid chain: 7-methylxanthine methyltransferase 1 (378 aa).

The S-adenosyl-L-homocysteine site is built by Y18, C61, N66, D100, L101, S139, F140, and C156. The theobromine site is built by Y157, H160, and W161. N178, D260, F262, and N263 together coordinate Mg(2+). Residue Y362 coordinates theobromine.

This sequence belongs to the methyltransferase superfamily. Type-7 methyltransferase family. Mg(2+) serves as cofactor. Mainly expressed, at low levels, in leaves and fruits (grains). Also present, at lower levels, in roots, stamens and pistils.

Its subcellular location is the cytoplasm. It catalyses the reaction 7-methylxanthine + S-adenosyl-L-methionine = theobromine + S-adenosyl-L-homocysteine + H(+). The protein operates within alkaloid biosynthesis. Its function is as follows. Involved in the biosynthesis of caffeine. Catalyzes the conversion of 7-methylxanthine (7mX) to theobromine and of paraxanthine to caffeine. The polypeptide is 7-methylxanthine methyltransferase 1 (Coffea canephora (Robusta coffee)).